The chain runs to 192 residues: Interleukin-18 (192 aa).

The propeptide occupies 1–35 (MAAEPVEDNCISFVEMKFINNTLYFVAENGDLESD).

It belongs to the IL-1 family. In terms of assembly, forms a ternary complex with ligand-binding receptor subunit IL18R1 and signaling receptor subunit IL18RAP at the plasma membrane. Mature IL18 first binds to IL18R1 forming a low affinity binary complex, which then interacts with IL18RAP to form a high affinity ternary complex that signals inside the cell. Interacts with cargo receptor TMED10; the interaction mediates the translocation from the cytoplasm into the ERGIC (endoplasmic reticulum-Golgi intermediate compartment) and thereby secretion. The pro-IL-18 precursor is processed by CASP1, CASP4 or CASP5 to yield its mature, active form. The pro-IL-18 precursor features autoinhibitory interactions between the propeptide and the post-cleavage-site region, preventing recognition by the IL18R1 receptor. Processing by CASP1, CASP4 or CASP5 induces conformational changes to generate critical receptor-binding sites. The mature form is then secreted and released in the extracellular milieu by passing through the gasdermin-D (GSDMD) pore. In contrast, cleavage by CASP3 inactivates IL18.

Its subcellular location is the cytoplasm. The protein resides in the cytosol. The protein localises to the secreted. Pro-inflammatory cytokine primarily involved in epithelial barrier repair, polarized T-helper 1 (Th1) cell and natural killer (NK) cell immune responses. Upon binding to IL18R1 and IL18RAP, forms a signaling ternary complex which activates NF-kappa-B, triggering synthesis of inflammatory mediators. Synergizes with IL12/interleukin-12 to induce IFNG synthesis from T-helper 1 (Th1) cells and natural killer (NK) cells. Involved in transduction of inflammation downstream of pyroptosis: its mature form is specifically released in the extracellular milieu by passing through the gasdermin-D (GSDMD) pore. The protein is Interleukin-18 (IL18) of Capra hircus (Goat).